A 456-amino-acid chain; its full sequence is Ezy-1 protein (456 aa).

The signal sequence occupies residues 1 to 28 (MQLSSSLRSARSAAASSGCALASRPVVA). Disordered stretches follow at residues 167-189 (SDGG…DGDG), 273-310 (FTGK…GGSG), and 414-456 (QPAG…SPNM). The span at 281–293 (AEGDDGEDEEEGE) shows a compositional bias: acidic residues. Residues 418-428 (DGHEPEPKRPE) are compositionally biased toward basic and acidic residues.

The chain is Ezy-1 protein (Ezy-1) from Chlamydomonas reinhardtii (Chlamydomonas smithii).